Here is a 252-residue protein sequence, read N- to C-terminus: MRFDVITLFPEFLAQSAGLGVVGRAQEKGLFSLHGWNPRDYAEGNYRRVDDRPFGGGPGMVMLIEPLQACLQAIRDADPTPARVIHLSPQGAPLTQAKVRELAALPRMVLLCGRYEGIDERFLEANVDEEISLGDYVLSGGELGAAVIIDAVARLQDGALNDAESAAQDSFEGDLGLLDCPHYSQPAQHPLGDVPDVLRSGNHAAIAAWRRQQSLVRTAQRRPDLLDEQALGKADRTLLEQGRQVQKQKADP.

S-adenosyl-L-methionine contacts are provided by residues Gly-113 and Leu-133–Leu-138.

This sequence belongs to the RNA methyltransferase TrmD family. As to quaternary structure, homodimer.

The protein localises to the cytoplasm. The enzyme catalyses guanosine(37) in tRNA + S-adenosyl-L-methionine = N(1)-methylguanosine(37) in tRNA + S-adenosyl-L-homocysteine + H(+). In terms of biological role, specifically methylates guanosine-37 in various tRNAs. This chain is tRNA (guanine-N(1)-)-methyltransferase, found in Stenotrophomonas maltophilia (strain K279a).